We begin with the raw amino-acid sequence, 338 residues long: Arginine N-succinyltransferase subunit alpha (338 aa).

Belongs to the succinylarginine dihydrolase family. Heterotetramer of two alpha and two beta subunits.

It catalyses the reaction succinyl-CoA + L-arginine = N(2)-succinyl-L-arginine + CoA + H(+). It functions in the pathway amino-acid degradation; L-arginine degradation via AST pathway; L-glutamate and succinate from L-arginine: step 1/5. Functionally, catalyzes the transfer of succinyl-CoA to arginine to produce N(2)-succinylarginine. Also acts on L-ornithine. This Pseudomonas aeruginosa (strain ATCC 15692 / DSM 22644 / CIP 104116 / JCM 14847 / LMG 12228 / 1C / PRS 101 / PAO1) protein is Arginine N-succinyltransferase subunit alpha (astA).